The chain runs to 204 residues: MAEQEPTAEQLAQIAAENEEDEHSVNYKPPAQKSIQEIQELDKDDESLRKYKEALLGRVAVSADPNVPNVVVTGLTLVCSSAPGPLELDLTGDLESFKKQSFVLKEGVEYRIKISFRVNREIVSGMKYIQHTYRKGVKIDKTDYMVGSYGPRAEEYEFLTPVEEAPKGMLARGSYSIKSRFTDDDKTDHLSWEWNLTIKKDWKD.

The interval 1–36 (MAEQEPTAEQLAQIAAENEEDEHSVNYKPPAQKSIQ) is disordered. At A2 the chain carries N-acetylalanine. The residue at position 34 (S34) is a Phosphoserine. K43 carries the N6-acetyllysine modification. Position 47 is a phosphoserine (S47). K105 and K127 each carry N6-acetyllysine. Glycyl lysine isopeptide (Lys-Gly) (interchain with G-Cter in SUMO1); alternate cross-links involve residues K138 and K141. Glycyl lysine isopeptide (Lys-Gly) (interchain with G-Cter in SUMO2); alternate cross-links involve residues K138 and K141. K141 bears the N6-acetyllysine; alternate mark. Position 141 is an N6-succinyllysine; alternate (K141). At K178 the chain carries N6-acetyllysine.

The protein belongs to the Rho GDI family. In terms of assembly, monomer. Interacts with FER. Interacts with PLXNB3. Forms a heterodimer with RAC1. Interacts with RHOA, the affinity is increased by three orders of magnitude when RHOA is prenylated. Interacts with PSMD10; the interaction increases ARHGDIA association with RHOA, leading to ARHGDIA-mediated inactivation of RHOA and ROCK and prolonged AKT activation. Interacts with KANK2; the interaction is direct and may regulate the interaction of ARHGDIA with RHOA, RAC1 and CDC42. Interacts with RHOC. Interacts with CDC42. Interacts with NGFR (via death domain); NGFR binding decreases the affinity for RHOA.

Its subcellular location is the cytoplasm. In terms of biological role, controls Rho proteins homeostasis. Regulates the GDP/GTP exchange reaction of the Rho proteins by inhibiting the dissociation of GDP from them, and the subsequent binding of GTP to them. Retains Rho proteins such as CDC42, RAC1 and RHOA in an inactive cytosolic pool, regulating their stability and protecting them from degradation. Actively involved in the recycling and distribution of activated Rho GTPases in the cell, mediates extraction from membranes of both inactive and activated molecules due its exceptionally high affinity for prenylated forms. Through the modulation of Rho proteins, may play a role in cell motility regulation. In glioma cells, inhibits cell migration and invasion by mediating the signals of SEMA5A and PLXNB3 that lead to inactivation of RAC1. This is Rho GDP-dissociation inhibitor 1 (ARHGDIA) from Homo sapiens (Human).